A 59-amino-acid polypeptide reads, in one-letter code: Conotoxin Cl14.4 (59 aa).

The first 19 residues, 1–19 (MKFLLFLSVALLLTSFIET), serve as a signal peptide directing secretion. Residues 20-36 (VTVNKAGMERPSRALVG) constitute a propeptide that is removed on maturation. At isoleucine 58 the chain carries Isoleucine amide.

Post-translationally, contains 2 disulfide bonds. As to expression, expressed by the venom duct.

The protein localises to the secreted. The sequence is that of Conotoxin Cl14.4 from Californiconus californicus (California cone).